We begin with the raw amino-acid sequence, 89 residues long: Small ribosomal subunit protein uS15 (89 aa).

Belongs to the universal ribosomal protein uS15 family. Part of the 30S ribosomal subunit. Forms a bridge to the 50S subunit in the 70S ribosome, contacting the 23S rRNA.

Functionally, one of the primary rRNA binding proteins, it binds directly to 16S rRNA where it helps nucleate assembly of the platform of the 30S subunit by binding and bridging several RNA helices of the 16S rRNA. Forms an intersubunit bridge (bridge B4) with the 23S rRNA of the 50S subunit in the ribosome. The polypeptide is Small ribosomal subunit protein uS15 (Ectopseudomonas mendocina (strain ymp) (Pseudomonas mendocina)).